A 267-amino-acid polypeptide reads, in one-letter code: Putative glycosyltransferase 63 (267 aa).

Belongs to the glycosyltransferase group 1 family. Glycosyltransferase 4 subfamily.

The protein is Putative glycosyltransferase 63 (SIFV0063) of Sulfolobus islandicus filamentous virus (isolate Iceland/Hveragerdi) (SIFV).